Here is a 179-residue protein sequence, read N- to C-terminus: MVQAWYMDDSAEDQRKPHRLQQDVPVSLEQLKALGVDSLSLDADRYESDPELAKIRKENNYTWMDIITIHKDTMPNYEEKLKIFYEEHLHLDDEIRYILEGSGYFDVRDQKDKWIRIFMQKGDMITLPAGIYHRFTLDENNYVKAMRLFVGDPVWTPFNRPADNCEAREKYVQFLAQTA.

Positions 88, 90, 94, and 133 each coordinate Fe(2+). Residues His88, His90, Glu94, and His133 each coordinate Ni(2+).

Belongs to the acireductone dioxygenase (ARD) family. As to quaternary structure, monomer. Interacts with MMP14. Requires Fe(2+) as cofactor. Ni(2+) serves as cofactor.

Its subcellular location is the cytoplasm. It is found in the nucleus. The protein resides in the cell membrane. It carries out the reaction 1,2-dihydroxy-5-(methylsulfanyl)pent-1-en-3-one + O2 = 4-methylsulfanyl-2-oxobutanoate + formate + 2 H(+). It catalyses the reaction 1,2-dihydroxy-5-(methylsulfanyl)pent-1-en-3-one + O2 = 3-(methylsulfanyl)propanoate + CO + formate + 2 H(+). It functions in the pathway amino-acid biosynthesis; L-methionine biosynthesis via salvage pathway; L-methionine from S-methyl-5-thio-alpha-D-ribose 1-phosphate: step 5/6. Catalyzes 2 different reactions between oxygen and the acireductone 1,2-dihydroxy-3-keto-5-methylthiopentene (DHK-MTPene) depending upon the metal bound in the active site. Fe-containing acireductone dioxygenase (Fe-ARD) produces formate and 2-keto-4-methylthiobutyrate (KMTB), the alpha-ketoacid precursor of methionine in the methionine recycle pathway. Ni-containing acireductone dioxygenase (Ni-ARD) produces methylthiopropionate, carbon monoxide and formate, and does not lie on the methionine recycle pathway. In Xenopus laevis (African clawed frog), this protein is Acireductone dioxygenase (adi1).